The sequence spans 325 residues: Lipoyl synthase (325 aa).

Positions 1 to 32 (MPPLADASTETLSPAEQAAVRHPEKAHRPDQP) are disordered. Basic and acidic residues predominate over residues 19 to 32 (AVRHPEKAHRPDQP). Positions 66, 71, 77, 92, 96, 99, and 305 each coordinate [4Fe-4S] cluster. In terms of domain architecture, Radical SAM core spans 78–294 (WAKKHATFMI…AEVANAKGFL (217 aa)).

This sequence belongs to the radical SAM superfamily. Lipoyl synthase family. [4Fe-4S] cluster is required as a cofactor.

The protein localises to the cytoplasm. It catalyses the reaction [[Fe-S] cluster scaffold protein carrying a second [4Fe-4S](2+) cluster] + N(6)-octanoyl-L-lysyl-[protein] + 2 oxidized [2Fe-2S]-[ferredoxin] + 2 S-adenosyl-L-methionine + 4 H(+) = [[Fe-S] cluster scaffold protein] + N(6)-[(R)-dihydrolipoyl]-L-lysyl-[protein] + 4 Fe(3+) + 2 hydrogen sulfide + 2 5'-deoxyadenosine + 2 L-methionine + 2 reduced [2Fe-2S]-[ferredoxin]. It functions in the pathway protein modification; protein lipoylation via endogenous pathway; protein N(6)-(lipoyl)lysine from octanoyl-[acyl-carrier-protein]: step 2/2. In terms of biological role, catalyzes the radical-mediated insertion of two sulfur atoms into the C-6 and C-8 positions of the octanoyl moiety bound to the lipoyl domains of lipoate-dependent enzymes, thereby converting the octanoylated domains into lipoylated derivatives. This Beijerinckia indica subsp. indica (strain ATCC 9039 / DSM 1715 / NCIMB 8712) protein is Lipoyl synthase.